We begin with the raw amino-acid sequence, 976 residues long: Ephrin type-B receptor 4b (976 aa).

The N-terminal stretch at 1 to 23 (MDRVCWIMALSWFWMVSTGLVSA) is a signal peptide. At 24–541 (EEEVLMNTKL…ESPSRLMLTG (518 aa)) the chain is on the extracellular side. The region spanning 25-204 (EEVLMNTKLE…FFKKCPAVSR (180 aa)) is the Eph LBD domain. Cystine bridges form between Cys-69/Cys-186 and Cys-103/Cys-113. 2 consecutive Fibronectin type-III domains span residues 326–434 (PPSA…TSRD) and 438–529 (PVSG…TLPD). A helical transmembrane segment spans residues 542 to 562 (VLVAIGLLILIAVVIVAVFCF). The Cytoplasmic segment spans residues 563–976 (RRSTRRRDPD…LRIHGGSLRY (414 aa)). The region spanning 613–897 (VKIEEVIGAG…IPDGPSHPLL (285 aa)) is the Protein kinase domain. ATP-binding positions include 619-627 (IGAGEFGEV) and Lys-645. Residue Asp-738 is the Proton acceptor of the active site. Residues 906-970 (SHCSSVADWL…LSSVQTLRIH (65 aa)) form the SAM domain.

It belongs to the protein kinase superfamily. Tyr protein kinase family. Ephrin receptor subfamily.

The protein resides in the cell membrane. The catalysed reaction is L-tyrosyl-[protein] + ATP = O-phospho-L-tyrosyl-[protein] + ADP + H(+). Functionally, receptor tyrosine kinase which binds promiscuously transmembrane ephrin-B family ligands residing on adjacent cells, leading to contact-dependent bidirectional signaling into neighboring cells. The signaling pathway downstream of the receptor is referred to as forward signaling while the signaling pathway downstream of the ephrin ligand is referred to as reverse signaling. Together with its cognate ligand/functional ligand EFNB2 is involved in the regulation of cell adhesion and cell migration, and plays a central role in heart morphogenesis, angiogenesis and blood vessel remodeling and permeability. EPHB4-mediated forward signaling controls cellular repulsion and segregation from EFNB2-expressing cells. Involved in somitogenesis. The chain is Ephrin type-B receptor 4b from Danio rerio (Zebrafish).